Here is a 644-residue protein sequence, read N- to C-terminus: Exoribonuclease 2 (644 aa).

The RNB domain maps to 189 to 516 (REDLTSLDFV…NHRLLKAVIK (328 aa)). One can recognise an S1 motif domain in the interval 561–643 (GTRFAAEIVD…ETRSIIARPV (83 aa)).

This sequence belongs to the RNR ribonuclease family. RNase II subfamily.

The protein localises to the cytoplasm. It catalyses the reaction Exonucleolytic cleavage in the 3'- to 5'-direction to yield nucleoside 5'-phosphates.. Its function is as follows. Involved in mRNA degradation. Hydrolyzes single-stranded polyribonucleotides processively in the 3' to 5' direction. The chain is Exoribonuclease 2 from Shigella flexneri serotype 5b (strain 8401).